Reading from the N-terminus, the 585-residue chain is Zinc finger protein 496 (585 aa).

Residues 1 to 41 (MPTALCPRVLAPKESEEPRKMRSPPGENPSPQGEPPSPESS) form a disordered region. Basic and acidic residues predominate over residues 11–20 (APKESEEPRK). Lys13 participates in a covalent cross-link: Glycyl lysine isopeptide (Lys-Gly) (interchain with G-Cter in SUMO2). Pro residues predominate over residues 26–38 (GENPSPQGEPPSP). One can recognise an SCAN box domain in the interval 42-124 (RRLFRRFRYQ…AAVEALEREP (83 aa)). The segment at 141–167 (DDGDGPAAPQDLEQERMSAESQSYPDA) is disordered. A Phosphoserine modification is found at Ser182. The KRAB domain occupies 220–294 (SPFKDMILCF…DLQDKEIPQA (75 aa)). The tract at residues 358–397 (SSSGDEDSQHSPYCTEELRSPPEDLHSVPAHQSNASAEGE) is disordered. Basic and acidic residues predominate over residues 373 to 383 (EELRSPPEDLH). Polar residues predominate over residues 387 to 397 (AHQSNASAEGE). A C2H2-type 1; degenerate zinc finger spans residues 405–427 (YVCPNCGKIFRWRVNFIRHLRSR). 2 consecutive C2H2-type zinc fingers follow at residues 433–455 (HKCS…LETH) and 461–483 (YRCT…RRIH). The segment at 483-506 (HLQPASQQPMKKSEEEALETEGTG) is disordered. Residue Lys494 forms a Glycyl lysine isopeptide (Lys-Gly) (interchain with G-Cter in SUMO2) linkage. C2H2-type zinc fingers lie at residues 520-543 (FQCG…RHCH) and 551-573 (FQCR…ERLH). The Nuclear localization signal motif lies at 575-579 (KRRSK).

The protein belongs to the krueppel C2H2-type zinc-finger protein family. As to quaternary structure, interacts (via zinc-fingers) with JARID2. Interacts with NSD1.

Its subcellular location is the nucleus. Its function is as follows. DNA-binding transcription factor that can both act as an activator and a repressor. The polypeptide is Zinc finger protein 496 (Znf496) (Mus musculus (Mouse)).